Consider the following 232-residue polypeptide: MADTKQKRVVVAIDGPAGAGKSTIAKGLASRLGFIYIDTGAMYRAVALWALRQGVDSGDMHRMEQLAMAAQIELGPGTISLNGEDVTQAIRTPEVSNGASKIGVIPGVRRAMVAKQREIGERTSVVMEGRDIGTVVFPQADVKIFLDANPDERVRRRYQEIRTKEDPPPISQGQLAAEMKERDMRDSTRADAPLAQAPDAVYLDSTALSIAEVEEAILKIVRSRVTNGRDFS.

Residue Gly15–Thr23 participates in ATP binding. The tract at residues Lys164–Ala192 is disordered. Positions Glu178–Arg189 are enriched in basic and acidic residues.

This sequence belongs to the cytidylate kinase family. Type 1 subfamily.

It is found in the cytoplasm. It catalyses the reaction CMP + ATP = CDP + ADP. The catalysed reaction is dCMP + ATP = dCDP + ADP. The protein is Cytidylate kinase of Solibacter usitatus (strain Ellin6076).